The sequence spans 347 residues: NADH-ubiquinone oxidoreductase chain 2 (347 aa).

Transmembrane regions (helical) follow at residues 3 to 23 (PPILIIIMSTVMSGTMIVLTS), 25 to 45 (HWLLTWIGFEMNMLAIIPILM), 60 to 80 (FLTQATASMLLMMGIIINLMF), 96 to 116 (GLVTIALTMKLGMAPFHFWVP), 122 to 142 (ISLSSGMILLTWQKIAPLSVL), 153 to 173 (LLITMAIASVLIGGWGGLNQT), 178 to 198 (ILAYSSIAHMGWMTVILTYNP), 200 to 220 (LMVLNLTIYITMTLSTFMLFM), 237 to 257 (LPLMTSLILMLMMSLGGLPPL), 274 to 294 (DMIILPTFMAITALLNLYFYM), and 323 to 343 (IILLPPLIIISTMLLPMTPMM).

Belongs to the complex I subunit 2 family. In terms of assembly, core subunit of respiratory chain NADH dehydrogenase (Complex I) which is composed of 45 different subunits. Interacts with TMEM242.

The protein localises to the mitochondrion inner membrane. It catalyses the reaction a ubiquinone + NADH + 5 H(+)(in) = a ubiquinol + NAD(+) + 4 H(+)(out). Core subunit of the mitochondrial membrane respiratory chain NADH dehydrogenase (Complex I) which catalyzes electron transfer from NADH through the respiratory chain, using ubiquinone as an electron acceptor. Essential for the catalytic activity and assembly of complex I. The protein is NADH-ubiquinone oxidoreductase chain 2 of Phoca vitulina (Harbor seal).